Here is a 155-residue protein sequence, read N- to C-terminus: RNA pyrophosphohydrolase (155 aa).

Residues K5–A147 form the Nudix hydrolase domain. The Nudix box motif lies at G42–G63.

The protein belongs to the Nudix hydrolase family. RppH subfamily. It depends on a divalent metal cation as a cofactor.

Accelerates the degradation of transcripts by removing pyrophosphate from the 5'-end of triphosphorylated RNA, leading to a more labile monophosphorylated state that can stimulate subsequent ribonuclease cleavage. This Helicobacter pylori (strain P12) protein is RNA pyrophosphohydrolase.